Reading from the N-terminus, the 170-residue chain is Tachykinin-4 (170 aa).

The N-terminal stretch at 1–16 (MLPLLALFLLIGPAVS) is a signal peptide. Residues 17–54 (TTTRDREDLTFGAEAESWVTVNLKGIPVPSIELKLQEL) constitute a propeptide that is removed on maturation. At M66 the chain carries Methionine amide. Positions 67-170 (GKRVEGVHPI…SQMMPRPSRP (104 aa)) are excised as a propeptide. A disordered region spans residues 107–170 (QETNHQSAGP…SQMMPRPSRP (64 aa)). Residues 123–140 (SLQSQRGRSEPPNHQQHV) show a composition bias toward polar residues.

Belongs to the tachykinin family.

The protein localises to the secreted. In terms of biological role, tachykinins are active peptides which excite neurons, evoke behavioral responses, are potent vasodilators and secretagogues, and contract (directly or indirectly) many smooth muscles. Hemokinin induces plasma extravasation, mast cell degranulation, muscle contraction, salivary secretion and scratching behavior. Increases sperm motility. Induces potent analgesic effects and may play a role in pain modulation. Promotes survival of bone marrow B lineage cells and of cultured LPS-stimulated pre-B cells and may act as an autocrine factor required for B-cell survival and proliferation. Lowers systemic arterial pressure following intravenous injection. Induces interferon-gamma production and may play a role in the inflammatory response. Shows potent affinity and specificity for the NK-1 receptor. The protein is Tachykinin-4 of Rattus norvegicus (Rat).